A 94-amino-acid polypeptide reads, in one-letter code: Small ribosomal subunit protein bS6 (94 aa).

It belongs to the bacterial ribosomal protein bS6 family.

Its function is as follows. Binds together with bS18 to 16S ribosomal RNA. This is Small ribosomal subunit protein bS6 from Fusobacterium nucleatum subsp. nucleatum (strain ATCC 25586 / DSM 15643 / BCRC 10681 / CIP 101130 / JCM 8532 / KCTC 2640 / LMG 13131 / VPI 4355).